Here is a 117-residue protein sequence, read N- to C-terminus: NADH dehydrogenase [ubiquinone] 1 beta subcomplex subunit 9 (117 aa).

An N-acetylserine modification is found at serine 2.

It belongs to the complex I LYR family. As to quaternary structure, complex I is composed of at least 49 different subunits. As to expression, expressed in roots, stems, flowers, rosette leaves, cauline leaves and siliques, with the highest expression in the stems.

It is found in the mitochondrion inner membrane. Its function is as follows. Accessory subunit of the mitochondrial membrane respiratory chain NADH dehydrogenase (Complex I), that is believed to be not involved in catalysis. Complex I functions in the transfer of electrons from NADH to the respiratory chain. The immediate electron acceptor for the enzyme is believed to be ubiquinone. Is required for correct plant growth and development. The chain is NADH dehydrogenase [ubiquinone] 1 beta subcomplex subunit 9 (CIB22) from Arabidopsis thaliana (Mouse-ear cress).